Reading from the N-terminus, the 367-residue chain is 4-hydroxy-3-methylbut-2-en-1-yl diphosphate synthase (flavodoxin) (367 aa).

Residues Cys-265, Cys-268, Cys-300, and Glu-307 each contribute to the [4Fe-4S] cluster site.

It belongs to the IspG family. [4Fe-4S] cluster serves as cofactor.

It carries out the reaction (2E)-4-hydroxy-3-methylbut-2-enyl diphosphate + oxidized [flavodoxin] + H2O + 2 H(+) = 2-C-methyl-D-erythritol 2,4-cyclic diphosphate + reduced [flavodoxin]. It participates in isoprenoid biosynthesis; isopentenyl diphosphate biosynthesis via DXP pathway; isopentenyl diphosphate from 1-deoxy-D-xylulose 5-phosphate: step 5/6. Functionally, converts 2C-methyl-D-erythritol 2,4-cyclodiphosphate (ME-2,4cPP) into 1-hydroxy-2-methyl-2-(E)-butenyl 4-diphosphate. The chain is 4-hydroxy-3-methylbut-2-en-1-yl diphosphate synthase (flavodoxin) from Bacillus anthracis.